We begin with the raw amino-acid sequence, 220 residues long: MTQETQQLTLALSKGRIFEETLPLLEAAGIKVTEDPETSRKLILQTNDANVRVIIVRASDVPTYVQYGAADFGVAGKDVLLEHGGEGLYQPIDLNIANCRMSVAVKDGFDYESAVQQGARLRVVTKYVQTAREHFAAKGVHVDLIKLYGSMELGPLVGLADAIVDLVSTGSTLRANHLVEVERIMDISSRLVVNKAALKLKRERLQPILEAFEKASKRSS.

Belongs to the ATP phosphoribosyltransferase family. Short subfamily. As to quaternary structure, heteromultimer composed of HisG and HisZ subunits.

The protein resides in the cytoplasm. The enzyme catalyses 1-(5-phospho-beta-D-ribosyl)-ATP + diphosphate = 5-phospho-alpha-D-ribose 1-diphosphate + ATP. The protein operates within amino-acid biosynthesis; L-histidine biosynthesis; L-histidine from 5-phospho-alpha-D-ribose 1-diphosphate: step 1/9. Catalyzes the condensation of ATP and 5-phosphoribose 1-diphosphate to form N'-(5'-phosphoribosyl)-ATP (PR-ATP). Has a crucial role in the pathway because the rate of histidine biosynthesis seems to be controlled primarily by regulation of HisG enzymatic activity. This Janthinobacterium sp. (strain Marseille) (Minibacterium massiliensis) protein is ATP phosphoribosyltransferase.